We begin with the raw amino-acid sequence, 85 residues long: Small ribosomal subunit protein eS27 (85 aa).

The C4-type zinc-finger motif lies at 38–60 (CHGCRTITTVFSHAQNVVICSSC).

It belongs to the eukaryotic ribosomal protein eS27 family. Zn(2+) is required as a cofactor.

The polypeptide is Small ribosomal subunit protein eS27 (rps27) (Dictyostelium discoideum (Social amoeba)).